A 540-amino-acid polypeptide reads, in one-letter code: Glucose-6-phosphate isomerase (540 aa).

Catalysis depends on Glu346, which acts as the Proton donor. Catalysis depends on residues His377 and Lys505.

This sequence belongs to the GPI family.

It localises to the cytoplasm. The enzyme catalyses alpha-D-glucose 6-phosphate = beta-D-fructose 6-phosphate. Its pathway is carbohydrate biosynthesis; gluconeogenesis. It functions in the pathway carbohydrate degradation; glycolysis; D-glyceraldehyde 3-phosphate and glycerone phosphate from D-glucose: step 2/4. In terms of biological role, catalyzes the reversible isomerization of glucose-6-phosphate to fructose-6-phosphate. This is Glucose-6-phosphate isomerase from Francisella tularensis subsp. tularensis (strain SCHU S4 / Schu 4).